A 112-amino-acid chain; its full sequence is Putative pterin-4-alpha-carbinolamine dehydratase (112 aa).

Belongs to the pterin-4-alpha-carbinolamine dehydratase family.

It carries out the reaction (4aS,6R)-4a-hydroxy-L-erythro-5,6,7,8-tetrahydrobiopterin = (6R)-L-erythro-6,7-dihydrobiopterin + H2O. In Shewanella sp. (strain MR-7), this protein is Putative pterin-4-alpha-carbinolamine dehydratase.